The chain runs to 762 residues: Catalase-peroxidase (762 aa).

The segment at 1–22 (MAEAKCPFSQSRSNANVAGGGT) is disordered. A cross-link (tryptophyl-tyrosyl-methioninium (Trp-Tyr) (with M-268)) is located at residues 96–242 (WHSAGTYRVF…LAASHMGLIY (147 aa)). The active-site Proton acceptor is histidine 97. A cross-link (tryptophyl-tyrosyl-methioninium (Tyr-Met) (with W-96)) is located at residues 242–268 (YVNPEGPDGNPDPVAAARDIRTTFGRM). A heme b-binding site is contributed by histidine 283.

It belongs to the peroxidase family. Peroxidase/catalase subfamily. In terms of assembly, homodimer or homotetramer. Requires heme b as cofactor. In terms of processing, formation of the three residue Trp-Tyr-Met cross-link is important for the catalase, but not the peroxidase activity of the enzyme.

The protein localises to the cytoplasm. The catalysed reaction is H2O2 + AH2 = A + 2 H2O. The enzyme catalyses 2 H2O2 = O2 + 2 H2O. Its function is as follows. Bifunctional enzyme with both catalase and broad-spectrum peroxidase activity. The protein is Catalase-peroxidase of Aspergillus niger (strain ATCC MYA-4892 / CBS 513.88 / FGSC A1513).